Reading from the N-terminus, the 537-residue chain is Putative cysteine ligase BshC (537 aa).

A coiled-coil region spans residues 383 to 451 (MERTQKLLKQ…EVKENQDNFN (69 aa)).

Belongs to the BshC family.

Its function is as follows. Involved in bacillithiol (BSH) biosynthesis. May catalyze the last step of the pathway, the addition of cysteine to glucosamine malate (GlcN-Mal) to generate BSH. In Staphylococcus haemolyticus (strain JCSC1435), this protein is Putative cysteine ligase BshC.